A 127-amino-acid polypeptide reads, in one-letter code: Phosphoribosyl-AMP cyclohydrolase (127 aa).

Residue Asp96 coordinates Mg(2+). Residue Cys97 participates in Zn(2+) binding. Positions 98 and 100 each coordinate Mg(2+). Cys113 and Cys120 together coordinate Zn(2+).

Belongs to the PRA-CH family. Homodimer. Requires Mg(2+) as cofactor. The cofactor is Zn(2+).

It is found in the cytoplasm. The enzyme catalyses 1-(5-phospho-beta-D-ribosyl)-5'-AMP + H2O = 1-(5-phospho-beta-D-ribosyl)-5-[(5-phospho-beta-D-ribosylamino)methylideneamino]imidazole-4-carboxamide. Its pathway is amino-acid biosynthesis; L-histidine biosynthesis; L-histidine from 5-phospho-alpha-D-ribose 1-diphosphate: step 3/9. Catalyzes the hydrolysis of the adenine ring of phosphoribosyl-AMP. This Corynebacterium jeikeium (strain K411) protein is Phosphoribosyl-AMP cyclohydrolase.